The sequence spans 39 residues: Potassium channel toxin alpha-KTx 31.1 (39 aa).

Intrachain disulfides connect C7–C30, C13–C35, and C17–C37.

This sequence belongs to the short scorpion toxin superfamily. Potassium channel inhibitor family. Alpha-KTx 31 subfamily. As to expression, expressed by the venom gland.

The protein resides in the secreted. Its function is as follows. Voltage-gated potassium channel inhibitor. 1 uM of the native toxin inhibits rat Kv1.2/KCNA2 (100% inhibition), and drosophila Shaker IR/Sh (100%), human Kv1.3/KCNA3 (83%), rat Kv1.1/KCNA1 (32%) and rat Kv1.6/KCNA6 (21%). This Buthus occitanus tunetanus (Common European scorpion) protein is Potassium channel toxin alpha-KTx 31.1.